Reading from the N-terminus, the 159-residue chain is Phosphopantetheine adenylyltransferase (159 aa).

T10 is a binding site for substrate. ATP-binding positions include 10 to 11 and H18; that span reads TF. The substrate site is built by K42, M74, and R88. Residues 89–91, E99, and 124–130 contribute to the ATP site; these read GLR and WSFISSS.

The protein belongs to the bacterial CoaD family. Homohexamer. Mg(2+) serves as cofactor.

It localises to the cytoplasm. It carries out the reaction (R)-4'-phosphopantetheine + ATP + H(+) = 3'-dephospho-CoA + diphosphate. Its pathway is cofactor biosynthesis; coenzyme A biosynthesis; CoA from (R)-pantothenate: step 4/5. Its function is as follows. Reversibly transfers an adenylyl group from ATP to 4'-phosphopantetheine, yielding dephospho-CoA (dPCoA) and pyrophosphate. The protein is Phosphopantetheine adenylyltransferase of Shigella dysenteriae serotype 1 (strain Sd197).